The following is a 408-amino-acid chain: FAD-dependent monooxygenase nscC (408 aa).

Residues 1 to 20 (MAPPLPILIIGAGISGLTTA) form the signal peptide. The FAD site is built by Glu-34 and Ala-45. N-linked (GlcNAc...) asparagine glycans are attached at residues Asn-91 and Asn-103. Arg-119 serves as a coordination point for FAD. Asn-170 and Asn-231 each carry an N-linked (GlcNAc...) asparagine glycan. FAD contacts are provided by Asp-328 and Gly-341.

Belongs to the paxM FAD-dependent monooxygenase family. The cofactor is FAD.

The protein operates within secondary metabolite biosynthesis. Its function is as follows. FAD-dependent monooxygenase; part of the gene cluster that mediates the biosynthesis of neosartoricin, a prenylated anthracenone that exhibits T-cell antiproliferative activity, suggestive of a physiological role as an immunosuppressive agent. The non-reducing polyketide synthase nscA probably synthesizes and cyclizes the decaketide backbone. The hydrolase nscB then mediates the product release through hydrolysis followed by spontaneous decarboxylation. The prenyltransferase nscD catalyzes the addition of the dimethylallyl group to the aromatic C5. The FAD-dependent monooxygenase nscC is then responsible for the stereospecific hydroxylation at C2. There is no gene encoding O-acetyltransferase in the nsc gene cluster; thus, the last step of 2-O-acetylation leading to neosartoricin may be catalyzed by an unidentified O-acetyltransferase. This Neosartorya fischeri (strain ATCC 1020 / DSM 3700 / CBS 544.65 / FGSC A1164 / JCM 1740 / NRRL 181 / WB 181) (Aspergillus fischerianus) protein is FAD-dependent monooxygenase nscC.